A 236-amino-acid polypeptide reads, in one-letter code: Rho-related GTP-binding protein RhoV (236 aa).

The disordered stretch occupies residues Met-1–Pro-28. Pro residues predominate over residues Glu-10–Pro-20. Position 25 is a phosphoserine (Ser-25). Residues Gly-38–Ser-45, Asp-85–Gln-89, and Thr-143–Asp-146 each bind GTP. Cys-234 carries S-palmitoyl cysteine lipidation.

It belongs to the small GTPase superfamily. Rho family. In terms of assembly, interacts with PAK2. Mg(2+) is required as a cofactor. In terms of tissue distribution, highly expressed in brain and testis and at lower levels in spleen and lung.

The protein localises to the cell membrane. It localises to the endosome membrane. Its function is as follows. Plays a role in the control of the actin cytoskeleton via activation of the JNK pathway. The polypeptide is Rho-related GTP-binding protein RhoV (Rattus norvegicus (Rat)).